The chain runs to 240 residues: Large ribosomal subunit protein bL25 (240 aa).

Positions 1–24 (MATVMEFKATARPKSGKGAARAER) are disordered.

This sequence belongs to the bacterial ribosomal protein bL25 family. CTC subfamily. Part of the 50S ribosomal subunit; part of the 5S rRNA/L5/L18/L25 subcomplex. Contacts the 5S rRNA. Binds to the 5S rRNA independently of L5 and L18.

Its function is as follows. This is one of the proteins that binds to the 5S RNA in the ribosome where it forms part of the central protuberance. This chain is Large ribosomal subunit protein bL25, found in Rhodopseudomonas palustris (strain HaA2).